The sequence spans 249 residues: Probable calcium-binding protein CML12 (249 aa).

Positions 1–24 are enriched in basic and acidic residues; sequence MQSQRERPREDRVHEETRGADHAH. The interval 1–80 is disordered; it reads MQSQRERPRE…RKGKAPATAE (80 aa). The span at 30–56 shows a compositional bias: low complexity; it reads AAAAASATATETATRTMSLHAGGVVVV. The span at 57–70 shows a compositional bias: basic and acidic residues; it reads DGKEKGKKEEGEGK. 4 EF-hand domains span residues 91-126, 128-163, 171-206, and 207-242; these read EQLR…LGLR, AAGD…LILG, VDQA…MGHP, and ICYA…SALD. Ca(2+) contacts are provided by D104, D106, D108, S110, E115, D141, D143, N145, T147, E152, D184, D186, N188, E195, D220, D222, D224, and E231.

In terms of biological role, potential calcium sensor. In Oryza sativa subsp. japonica (Rice), this protein is Probable calcium-binding protein CML12 (CML12).